The sequence spans 348 residues: Arginine kinase Oct f 2 (348 aa).

Residues Met-1–Lys-83 enclose the Phosphagen kinase N-terminal domain. Gly-56–Tyr-60 contacts substrate. In terms of domain architecture, Phosphagen kinase C-terminal spans Met-111–Ser-347. Residues Ser-114–Arg-118 and His-177 each bind ATP. Glu-217 lines the substrate pocket. Arg-221 is a binding site for ATP. Cys-263 provides a ligand contact to substrate. ATP is bound by residues Arg-272 to His-276 and Arg-300 to Glu-305. Glu-305 lines the substrate pocket.

The protein belongs to the ATP:guanido phosphotransferase family. Muscle (at protein level).

The catalysed reaction is L-arginine + ATP = N(omega)-phospho-L-arginine + ADP + H(+). Its function is as follows. Catalyzes the reversible transfer of high energy ATP gamma-phosphate group to L-arginine. In Amphioctopus fangsiao (Ocellated octopus), this protein is Arginine kinase Oct f 2.